The chain runs to 438 residues: MKIKPILELIPEVKRPLKGVSFKEKIQWTGLVLILYFILGTIDIYMGGAEMPAMFAFWQTVTASKMGTLITLGIGPIVTAGIIMQLLVGSELISLDLSKPMNRALFQGLQKLFGIFLCFLEAVMFVGAGAFGVVNSTLALILVLQLALGAILVIYLDEIVSRYGIGSGIGLFIAAGVAQTIFVGAFGAEGYLWKFFSAMSVGSLGIAFEYILPILSTLFVFLVVVYVESIRVEIPLAHGRVKGAVGKYPIKFIYVSNLPVILAAALFANIQLWGMFLDRMGYPILGQYSNGTAVSGIAYYFSTPYGISNIISDPLHAIFYTLMMVIFCILFGLFWVETSGLDAKSMAKKLGNLDMAIKGFRKSQKSIEQRLKRYIKPITVMGSAFVGFLAAAADFTGALGGGTGVLLTVSIVYRLYEQLVQEQLSELHPAVAKFVGKR.

Residues 1 to 43 traverse the membrane as a helical segment; sequence MKIKPILELIPEVKRPLKGVSFKEKIQWTGLVLILYFILGTID. Over 44–54 the chain is Extracellular; it reads IYMGGAEMPAM. Positions 55–62 form an intramembrane region, helical; sequence FAFWQTVT. A discontinuously helical transmembrane segment spans residues 55 to 83; the sequence is FAFWQTVTASKMGTLITLGIGPIVTAGII. An intramembrane segment occupies 63–74; that stretch reads ASKMGTLITLGI. Positions 75–83 form an intramembrane region, helical; the sequence is GPIVTAGII. Residues 84–104 are Cytoplasmic-facing; that stretch reads MQLLVGSELISLDLSKPMNRA. A helical membrane pass occupies residues 105–129; that stretch reads LFQGLQKLFGIFLCFLEAVMFVGAG. Residues 130–136 lie on the Extracellular side of the membrane; sequence AFGVVNS. A helical membrane pass occupies residues 137-161; it reads TLALILVLQLALGAILVIYLDEIVS. The Cytoplasmic segment spans residues 162-167; it reads RYGIGS. Residues 168–186 form a helical membrane-spanning segment; it reads GIGLFIAAGVAQTIFVGAF. Residues 187 to 209 lie on the Extracellular side of the membrane; sequence GAEGYLWKFFSAMSVGSLGIAFE. Residues 210–231 traverse the membrane as a helical segment; that stretch reads YILPILSTLFVFLVVVYVESIR. At 232-256 the chain is on the cytoplasmic side; it reads VEIPLAHGRVKGAVGKYPIKFIYVS. Residues 257–278 traverse the membrane as a helical segment; it reads NLPVILAAALFANIQLWGMFLD. Residues 279–315 lie on the Extracellular side of the membrane; the sequence is RMGYPILGQYSNGTAVSGIAYYFSTPYGISNIISDPL. The chain crosses the membrane as a helical span at residues 316–335; the sequence is HAIFYTLMMVIFCILFGLFW. The Cytoplasmic portion of the chain corresponds to 336-378; the sequence is VETSGLDAKSMAKKLGNLDMAIKGFRKSQKSIEQRLKRYIKPI. Residues 379–397 form a helical membrane-spanning segment; the sequence is TVMGSAFVGFLAAAADFTG. Topologically, residues 398–400 are extracellular; it reads ALG. The helical transmembrane segment at 401 to 415 threads the bilayer; sequence GGTGVLLTVSIVYRL. Residues 416 to 438 lie on the Cytoplasmic side of the membrane; the sequence is YEQLVQEQLSELHPAVAKFVGKR.

The protein belongs to the SecY/SEC61-alpha family. As to quaternary structure, component of the Sec protein translocase complex. Heterotrimer consisting of alpha (SecY), beta (SecG) and gamma (SecE) subunits. The heterotrimers can form oligomers, although 1 heterotrimer is thought to be able to translocate proteins. Interacts with the ribosome. May interact with SecDF, and other proteins may be involved.

The protein resides in the cell membrane. The central subunit of the protein translocation channel SecYEG. Consists of two halves formed by TMs 1-5 and 6-10. These two domains form a lateral gate at the front which open onto the bilayer between TMs 2 and 7, and are clamped together by SecE at the back. The channel is closed by both a pore ring composed of hydrophobic SecY resides and a short helix (helix 2A) on the extracellular side of the membrane which forms a plug. The plug probably moves laterally to allow the channel to open. The ring and the pore may move independently. In Methanococcus vannielii, this protein is Protein translocase subunit SecY.